We begin with the raw amino-acid sequence, 202 residues long: Dephospho-CoA kinase (202 aa).

Residues Val-4–Gln-200 form the DPCK domain. Residue Gly-12 to Ala-17 participates in ATP binding.

The protein belongs to the CoaE family.

The protein resides in the cytoplasm. The catalysed reaction is 3'-dephospho-CoA + ATP = ADP + CoA + H(+). It functions in the pathway cofactor biosynthesis; coenzyme A biosynthesis; CoA from (R)-pantothenate: step 5/5. Functionally, catalyzes the phosphorylation of the 3'-hydroxyl group of dephosphocoenzyme A to form coenzyme A. This chain is Dephospho-CoA kinase, found in Idiomarina loihiensis (strain ATCC BAA-735 / DSM 15497 / L2-TR).